The following is a 426-amino-acid chain: Antigen EM13 (426 aa).

The region spanning 1–240 (MIQERADIEK…TVAKVDADAD (240 aa)) is the F-BAR domain. 2 disordered regions span residues 287-315 (LTSL…ISTS) and 350-369 (ISKE…FVDD). The span at 305 to 315 (TTDSGSNISTS) shows a compositional bias: polar residues. Residues 371–426 (RPGVPIRALYDYVGVEADELSFNSGDLFEKLEDEDEQGWCKGRKDGRVGLYPRQLR) form the SH3 domain.

This is Antigen EM13 (EM13) from Echinococcus multilocularis (Fox tapeworm).